A 453-amino-acid polypeptide reads, in one-letter code: UDP-glycosyltransferase 76E1 (453 aa).

Residues S272, 331–333 (APQ), 348–356 (HCGWNSTLE), and 370–373 (TGDQ) contribute to the UDP-alpha-D-glucose site.

This sequence belongs to the UDP-glycosyltransferase family.

In terms of biological role, possesses low quercetin 3-O-glucosyltransferase and 7-O-glucosyltransferase activities in vitro. The polypeptide is UDP-glycosyltransferase 76E1 (UGT76E1) (Arabidopsis thaliana (Mouse-ear cress)).